The following is a 496-amino-acid chain: Catalase-A (496 aa).

Residues His-54 and Asn-128 contribute to the active site. Residue Tyr-338 coordinates heme. Residues 494-496 carry the Microbody targeting signal motif; it reads SNL.

This sequence belongs to the catalase family. Heme is required as a cofactor.

The protein localises to the peroxisome matrix. It catalyses the reaction 2 H2O2 = O2 + 2 H2O. In terms of biological role, catalyzes the degradation of hydrogen peroxide (H(2)O(2)) generated by peroxisomal oxidases to water and oxygen, thereby protecting cells from the toxic effects of hydrogen peroxide. The chain is Catalase-A (catA) from Dictyostelium discoideum (Social amoeba).